The primary structure comprises 491 residues: MASRCWRWWGWSAWPRTRLPPAGSTPSFCHHFSTQEKTPQICVVGSGPAGFYTAQHLLKHPQAHVDIYEKQPVPFGLVRFGVAPDHPEVKNVINTFTQTAHSGRCAFWGNVEVGRDVTVPELREAYHAVVLSYGAEDHRALEIPGEELPGVCSARAFVGWYNGLPENQELEPDLSCDTAVILGQGNVALDVARILLTPPEHLERTDITKAALGVLRQSRVKTVWLVGRRGPLQVAFTIKELREMIQLPGARPILDPVDFLGLQDKIKEVPRPRKRLTELLLRTATEKPGPAEAARQASASRAWGLRFFRSPQQVLPSPDGRRAAGVRLAVTRLEGVDEATRAVPTGDMEDLPCGLVLSSIGYKSRPVDPSVPFDSKLGVIPNVEGRVMDVPGLYCSGWVKRGPTGVIATTMTDSFLTGQMLLQDLKAGLLPSGPRPGYAAIQALLSSRGVRPVSFSDWEKLDAEEVARGQGTGKPREKLVDPQEMLRLLGH.

Residues Met1–Phe32 constitute a mitochondrion transit peptide. FAD is bound by residues Ala49, Glu69, Leu77, and Val113. NADP(+) is bound by residues Gln184 to Val187, Arg228 to Arg229, and Glu240. Phosphoserine is present on residues Ser310 and Ser317. Residues Trp398 and Gly405 to Ile407 each bind FAD. Residue Gly405 participates in NADP(+) binding.

The protein belongs to the ferredoxin--NADP reductase type 1 family. In terms of assembly, monomer. Interacts directly with FDX1. The cofactor is FAD.

The protein localises to the mitochondrion. It is found in the mitochondrion inner membrane. It carries out the reaction 2 reduced [adrenodoxin] + NADP(+) + H(+) = 2 oxidized [adrenodoxin] + NADPH. The catalysed reaction is 2 reduced [2Fe-2S]-[ferredoxin] + NADP(+) + H(+) = 2 oxidized [2Fe-2S]-[ferredoxin] + NADPH. The protein operates within steroid metabolism; cholesterol metabolism. Its function is as follows. Serves as the first electron transfer protein in all the mitochondrial P450 systems including cholesterol side chain cleavage in all steroidogenic tissues, steroid 11-beta hydroxylation in the adrenal cortex, 25-OH-vitamin D3-24 hydroxylation in the kidney, and sterol C-27 hydroxylation in the liver. Also acts as a ferredoxin--NADP(+) reductase essential for coenzyme Q biosynthesis: together with FDX2, transfers the electrons required for the hydroxylation reaction performed by COQ6. The chain is NADPH:adrenodoxin oxidoreductase, mitochondrial from Homo sapiens (Human).